The following is a 1523-amino-acid chain: Lysophospholipase nte1 (1523 aa).

Residues 1–66 lie on the Cytoplasmic side of the membrane; it reads MADGVTLVDS…LPPVPTTMAG (66 aa). The helical transmembrane segment at 67-87 threads the bilayer; the sequence is WIGWVFSFFFQVIPSVLYWVI. Topologically, residues 88-109 are lumenal; sequence TFSTITLPTWLFTLFSMSLTFT. Residues 110–130 traverse the membrane as a helical segment; the sequence is MNFTTLLLIVLAMVSTISWFI. The Cytoplasmic segment spans residues 131–1523; that stretch reads RYRFLNMYSR…RTMAPRRASI (1393 aa). Disordered regions lie at residues 309–384 and 524–545; these read VPNS…KSVH and RAAT…GVSP. Positions 370–382 are enriched in basic residues; the sequence is ESRKHSSRKRRKS. A nucleoside 3',5'-cyclic phosphate is bound by residues 681 to 800 and 841 to 961; these read GGTS…GAVA and RLTS…IAQR. The PNPLA domain maps to 1220–1384; that stretch reads LVLGGGGARG…IDNLTVDHMK (165 aa). The GXGXXG motif lies at 1224–1229; it reads GGGARG. The short motif at 1251–1255 is the GXSXG element; the sequence is GTSIG. Serine 1253 serves as the catalytic Nucleophile. Aspartate 1371 functions as the Proton acceptor in the catalytic mechanism. Positions 1371-1373 match the DGA/G motif; it reads DGG. The interval 1502-1523 is disordered; that stretch reads LPEETEEKKKLQRTMAPRRASI.

Belongs to the NTE family.

The protein localises to the endoplasmic reticulum membrane. The catalysed reaction is a 1-acyl-sn-glycero-3-phosphocholine + H2O = sn-glycerol 3-phosphocholine + a fatty acid + H(+). Inhibited by organophosphorus esters. Functionally, intracellular phospholipase B that catalyzes the double deacylation of phosphatidylcholine (PC) to glycerophosphocholine (GroPCho). Plays an important role in membrane lipid homeostasis. Responsible for the rapid PC turnover in response to inositol, elevated temperatures, or when choline is present in the growth medium. The chain is Lysophospholipase nte1 (nte1) from Neosartorya fischeri (strain ATCC 1020 / DSM 3700 / CBS 544.65 / FGSC A1164 / JCM 1740 / NRRL 181 / WB 181) (Aspergillus fischerianus).